Consider the following 337-residue polypeptide: Hairy/enhancer-of-split related with YRPW motif protein 2 (337 aa).

Residues 1–52 (MKRPCEETTSESDMDETIDVGSENNYSGQSTSSVIRLNSPTTTSQIMARKKR) form a disordered region. Positions 8–18 (TTSESDMDETI) are enriched in acidic residues. Residues 22-46 (SENNYSGQSTSSVIRLNSPTTTSQI) are compositionally biased toward polar residues. The transcriptional repression and interaction with NCOR1 and SIN3A stretch occupies residues 47–116 (MARKKRRGII…GGKGYFDAHA (70 aa)). Residues 48–103 (ARKKRRGIIEKRRRDRINNSLSELRRLVPTAFEKQGSAKLEKAEILQMTVDHLKML) enclose the bHLH domain. The Orange domain occupies 122 to 157 (MSIGFRECLTEVARYLSSVEGLDSSDPLRVRLVSHL). The segment covering 307–325 (LSVSATSSPQQTSSGTNNK) has biased composition (polar residues). Residues 307–337 (LSVSATSSPQQTSSGTNNKPYRPWGTEVGAF) are disordered. The YRPW motif motif lies at 327 to 330 (YRPW).

This sequence belongs to the HEY family. In terms of assembly, may self-associate. Interacts with GATA4, HES1 and HEYL. Interacts with HDAC1, NCOR1 and SIN3A. Interacts with ARNT and GATA6.

The protein localises to the nucleus. Its function is as follows. Downstream effector of Notch signaling which may be required for cardiovascular development. Transcriptional repressor which binds preferentially to the canonical E box sequence 5'-CACGTG-3'. Represses transcription by the cardiac transcriptional activators GATA4 and GATA6. In Homo sapiens (Human), this protein is Hairy/enhancer-of-split related with YRPW motif protein 2 (HEY2).